Consider the following 237-residue polypeptide: Ribonuclease PH (237 aa).

Residues Arg86 and 124–126 each bind phosphate; that span reads GTR.

It belongs to the RNase PH family. As to quaternary structure, homohexameric ring arranged as a trimer of dimers.

The catalysed reaction is tRNA(n+1) + phosphate = tRNA(n) + a ribonucleoside 5'-diphosphate. In terms of biological role, phosphorolytic 3'-5' exoribonuclease that plays an important role in tRNA 3'-end maturation. Removes nucleotide residues following the 3'-CCA terminus of tRNAs; can also add nucleotides to the ends of RNA molecules by using nucleoside diphosphates as substrates, but this may not be physiologically important. Probably plays a role in initiation of 16S rRNA degradation (leading to ribosome degradation) during starvation. In Shewanella loihica (strain ATCC BAA-1088 / PV-4), this protein is Ribonuclease PH.